We begin with the raw amino-acid sequence, 389 residues long: Choline/ethanolaminephosphotransferase 2 (389 aa).

A run of 8 helical transmembrane segments spans residues 49 to 69, 141 to 161, 176 to 196, 220 to 240, 252 to 272, 286 to 306, 321 to 338, and 350 to 370; these read MITL…YIYS, TFWF…EHYF, GLAL…EWWA, IILF…NTSN, MLLA…VLIW, HLVV…MILA, MSLL…TARL, and VLLG…TSVI.

It belongs to the CDP-alcohol phosphatidyltransferase class-I family. It depends on Mg(2+) as a cofactor. Requires Mn(2+) as cofactor.

The protein localises to the membrane. The enzyme catalyses CDP-ethanolamine + a 1,2-diacyl-sn-glycerol = a 1,2-diacyl-sn-glycero-3-phosphoethanolamine + CMP + H(+). It carries out the reaction CDP-choline + a 1,2-diacyl-sn-glycerol = a 1,2-diacyl-sn-glycero-3-phosphocholine + CMP + H(+). It participates in phospholipid metabolism; phosphatidylethanolamine biosynthesis; phosphatidylethanolamine from ethanolamine: step 3/3. The protein operates within phospholipid metabolism; phosphatidylcholine biosynthesis; phosphatidylcholine from phosphocholine: step 2/2. In terms of biological role, catalyzes both phosphatidylcholine and phosphatidylethanolamine biosynthesis from CDP-choline and CDP-ethanolamine, respectively. Has a higher cholinephosphotransferase activity than ethanolaminephosphotransferase activity. This Arabidopsis thaliana (Mouse-ear cress) protein is Choline/ethanolaminephosphotransferase 2 (AAPT2).